The sequence spans 291 residues: BTB/POZ domain-containing protein 19 (291 aa).

Residues 29 to 98 (SDVCFVVGQE…LYTNSVKLYR (70 aa)) enclose the BTB domain. The 101-residue stretch at 134–234 (CEALQVAVTF…LALLAPAELS (101 aa)) folds into the BACK domain.

The sequence is that of BTB/POZ domain-containing protein 19 (BTBD19) from Homo sapiens (Human).